A 62-amino-acid chain; its full sequence is Disintegrin atropoimin (62 aa).

Residues glutamate 1–glycine 62 enclose the Disintegrin domain. Cystine bridges form between cysteine 6–cysteine 21, cysteine 8–cysteine 16, cysteine 15–cysteine 38, cysteine 29–cysteine 35, and cysteine 34–cysteine 48. Residues glycine 41–aspartate 42 carry the Cell attachment site motif.

Belongs to the venom metalloproteinase (M12B) family. P-II subfamily. P-IIa sub-subfamily. As to quaternary structure, monomer. Expressed by the venom gland.

It is found in the secreted. In terms of biological role, inhibits ADP- (IC(50)=63 nM) and collagen-induced (IC(50)=53 nM) aggregation of human platelets. In vitro, inhibits adhesion of endothelial cells to vitronectin, type-I collagen and, to a lower degree, fibronectin and laminin. This is Disintegrin atropoimin from Metlapilcoatlus mexicanus (Central American jumping pitviper).